We begin with the raw amino-acid sequence, 677 residues long: Elongation factor G 2 (677 aa).

The 276-residue stretch at 8–283 folds into the tr-type G domain; that stretch reads SRIRNIGIIA…AVVNFLPSPE (276 aa). Residues 17–24, 81–85, and 135–138 contribute to the GTP site; these read AHIDAGKT, DTPGH, and NKMD.

It belongs to the TRAFAC class translation factor GTPase superfamily. Classic translation factor GTPase family. EF-G/EF-2 subfamily.

It localises to the cytoplasm. Functionally, catalyzes the GTP-dependent ribosomal translocation step during translation elongation. During this step, the ribosome changes from the pre-translocational (PRE) to the post-translocational (POST) state as the newly formed A-site-bound peptidyl-tRNA and P-site-bound deacylated tRNA move to the P and E sites, respectively. Catalyzes the coordinated movement of the two tRNA molecules, the mRNA and conformational changes in the ribosome. The polypeptide is Elongation factor G 2 (Syntrophus aciditrophicus (strain SB)).